We begin with the raw amino-acid sequence, 226 residues long: ATP synthase F(0) complex subunit a (226 aa).

6 consecutive transmembrane segments (helical) span residues 5–25 (LFAS…LIIL), 68–88 (WSLM…LGLL), 97–117 (QLSM…TTGF), 138–158 (IPML…ALAV), 160–180 (LTAN…ATLA), and 189–209 (TLII…VALI).

This sequence belongs to the ATPase A chain family. Component of the ATP synthase complex composed at least of ATP5F1A/subunit alpha, ATP5F1B/subunit beta, ATP5MC1/subunit c (homooctomer), MT-ATP6/subunit a, MT-ATP8/subunit 8, ATP5ME/subunit e, ATP5MF/subunit f, ATP5MG/subunit g, ATP5MK/subunit k, ATP5MJ/subunit j, ATP5F1C/subunit gamma, ATP5F1D/subunit delta, ATP5F1E/subunit epsilon, ATP5PF/subunit F6, ATP5PB/subunit b, ATP5PD/subunit d, ATP5PO/subunit OSCP. ATP synthase complex consists of a soluble F(1) head domain (subunits alpha(3) and beta(3)) - the catalytic core - and a membrane F(0) domain - the membrane proton channel (subunits c, a, 8, e, f, g, k and j). These two domains are linked by a central stalk (subunits gamma, delta, and epsilon) rotating inside the F1 region and a stationary peripheral stalk (subunits F6, b, d, and OSCP). Interacts with DNAJC30; interaction is direct.

It is found in the mitochondrion inner membrane. The catalysed reaction is H(+)(in) = H(+)(out). Functionally, subunit a, of the mitochondrial membrane ATP synthase complex (F(1)F(0) ATP synthase or Complex V) that produces ATP from ADP in the presence of a proton gradient across the membrane which is generated by electron transport complexes of the respiratory chain. ATP synthase complex consist of a soluble F(1) head domain - the catalytic core - and a membrane F(1) domain - the membrane proton channel. These two domains are linked by a central stalk rotating inside the F(1) region and a stationary peripheral stalk. During catalysis, ATP synthesis in the catalytic domain of F(1) is coupled via a rotary mechanism of the central stalk subunits to proton translocation. With the subunit c (ATP5MC1), forms the proton-conducting channel in the F(0) domain, that contains two crucial half-channels (inlet and outlet) that facilitate proton movement from the mitochondrial intermembrane space (IMS) into the matrix. Protons are taken up via the inlet half-channel and released through the outlet half-channel, following a Grotthuss mechanism. This is ATP synthase F(0) complex subunit a from Gorilla gorilla gorilla (Western lowland gorilla).